The chain runs to 233 residues: Orotidine 5'-phosphate decarboxylase (233 aa).

Substrate is bound by residues Asp11, Lys33, 60–69 (DLKFHDIPNT), Thr120, Arg181, Gln190, Gly210, and Arg211. Lys62 serves as the catalytic Proton donor.

The protein belongs to the OMP decarboxylase family. Type 1 subfamily. As to quaternary structure, homodimer.

It catalyses the reaction orotidine 5'-phosphate + H(+) = UMP + CO2. It functions in the pathway pyrimidine metabolism; UMP biosynthesis via de novo pathway; UMP from orotate: step 2/2. In terms of biological role, catalyzes the decarboxylation of orotidine 5'-monophosphate (OMP) to uridine 5'-monophosphate (UMP). In Vibrio campbellii (strain ATCC BAA-1116), this protein is Orotidine 5'-phosphate decarboxylase.